We begin with the raw amino-acid sequence, 82 residues long: MVTIRLARHGAKKRPFYQVVVTDSRNARNGRFIERVGFFNPIASGQAEALRLDLDRIEHWVGQGATLSDRVNALIKQAKKAA.

This sequence belongs to the bacterial ribosomal protein bS16 family.

The sequence is that of Small ribosomal subunit protein bS16 from Erwinia tasmaniensis (strain DSM 17950 / CFBP 7177 / CIP 109463 / NCPPB 4357 / Et1/99).